The chain runs to 160 residues: SsrA-binding protein (160 aa).

The segment at Lys-131–Asp-160 is disordered.

The protein belongs to the SmpB family.

The protein localises to the cytoplasm. Required for rescue of stalled ribosomes mediated by trans-translation. Binds to transfer-messenger RNA (tmRNA), required for stable association of tmRNA with ribosomes. tmRNA and SmpB together mimic tRNA shape, replacing the anticodon stem-loop with SmpB. tmRNA is encoded by the ssrA gene; the 2 termini fold to resemble tRNA(Ala) and it encodes a 'tag peptide', a short internal open reading frame. During trans-translation Ala-aminoacylated tmRNA acts like a tRNA, entering the A-site of stalled ribosomes, displacing the stalled mRNA. The ribosome then switches to translate the ORF on the tmRNA; the nascent peptide is terminated with the 'tag peptide' encoded by the tmRNA and targeted for degradation. The ribosome is freed to recommence translation, which seems to be the essential function of trans-translation. The sequence is that of SsrA-binding protein from Pseudomonas fluorescens (strain Pf0-1).